The sequence spans 143 residues: Transcriptional regulator MraZ (143 aa).

SpoVT-AbrB domains follow at residues 5 to 47 (EYQH…PKDE) and 76 to 119 (AIES…SKDN).

Belongs to the MraZ family. As to quaternary structure, forms oligomers.

It is found in the cytoplasm. The protein localises to the nucleoid. This chain is Transcriptional regulator MraZ, found in Oenococcus oeni (strain ATCC BAA-331 / PSU-1).